We begin with the raw amino-acid sequence, 460 residues long: NADH-ubiquinone oxidoreductase chain 4 (460 aa).

Helical transmembrane passes span 22 to 42, 59 to 79, 93 to 113, 114 to 134, 148 to 168, 195 to 215, 225 to 245, 258 to 278, 286 to 306, 310 to 330, 351 to 371, 394 to 414, and 440 to 460; these read WLWPITTTHSLLIALLSLLWF, IDPLSAPLLILTCWLLPLMIL, QRIYITLLISLQTFLIMAFSA, TELIMFYIMFEATLIPTLIII, TYFLFYTLIGSLPLLVALLLM, FWWTACLIAFLVKMPLYGVHL, PIAGSMILAAVLLKLGGYGMM, MAYPFLILAIWGVIMTSSICL, LIAYSSVSHMGLVAGAIMIQT, FAGAITLMIAHGLVSSALFCL, VMLPLMATWWFIANLANLALP, ILLTGLGVLITASYSLYMFLM, and LHLIPMLLLILKPELIWGWTF.

This sequence belongs to the complex I subunit 4 family.

Its subcellular location is the mitochondrion membrane. It catalyses the reaction a ubiquinone + NADH + 5 H(+)(in) = a ubiquinol + NAD(+) + 4 H(+)(out). Functionally, core subunit of the mitochondrial membrane respiratory chain NADH dehydrogenase (Complex I) that is believed to belong to the minimal assembly required for catalysis. Complex I functions in the transfer of electrons from NADH to the respiratory chain. The immediate electron acceptor for the enzyme is believed to be ubiquinone. This chain is NADH-ubiquinone oxidoreductase chain 4 (MT-ND4), found in Squalus acanthias (Spiny dogfish).